Consider the following 540-residue polypeptide: MKLLAVRRLFRIQRVVIRYRLDDLLFEQPLLPWWLASLRLLMPWRWLPRKPTELSRGARLRLALQDLGPIFIKFGQLLSTRRDLLPTDIADELMLLQDRVPPFDPQKAVALIEEQLGAKVGEVFSRFDVEPLASASVAQVHAARLKTGEEVVVKVVRPGLKPVIAQDLAWLFLIAKAAERASADARRLHPVEIVGDYEKTIYDELDLLREAANASQLRRNFEGSELMYVPQVYWDLCRPKVLVMERIYGVPVTDMVTLADQRTDMKLLAERGVEVFFTQVFRDSFFHADMHPGNIFVSTVKPWSPQYIAIDCGIVGSLTAEDQDYLARNLIAFFKRDYRRVAQLHIDSGWVPAHTKVNEFEAAIRTVCEPIFEKPLKDISFGQVLMRLFQTARRFNMEVQPQLVLLQKTLLNIEGLGRQLYPDLDLWSTAKPFLERWMRDRYSPKAVFGNIHGQVEQLPHLANMARDLLERLSQPHLNDPQLPERRRQGDRWALRLLGAGLLGGGAVLAAGAAEAASLAAPAAWPAWLMLAAGLYLIVRQ.

Residues 24-44 (LLFEQPLLPWWLASLRLLMPW) traverse the membrane as a helical segment. In terms of domain architecture, Protein kinase spans 126–494 (RFDVEPLASA…RRRQGDRWAL (369 aa)). ATP-binding positions include 132–140 (LASASVAQV) and K154. D289 serves as the catalytic Proton acceptor. The next 2 membrane-spanning stretches (helical) occupy residues 496–516 (LLGA…AEAA) and 518–538 (LAAP…YLIV).

This sequence belongs to the ABC1 family. UbiB subfamily.

It localises to the cell inner membrane. It functions in the pathway cofactor biosynthesis; ubiquinone biosynthesis [regulation]. Functionally, is probably a protein kinase regulator of UbiI activity which is involved in aerobic coenzyme Q (ubiquinone) biosynthesis. In Pseudomonas putida (strain GB-1), this protein is Probable protein kinase UbiB.